Reading from the N-terminus, the 254-residue chain is 4-hydroxy-tetrahydrodipicolinate reductase (254 aa).

7 to 12 contributes to the NAD(+) binding site; it reads GASGRI. Residue arginine 35 participates in NADP(+) binding. NAD(+) contacts are provided by residues 91–93 and 115–118; these read GTT and AHNM. Histidine 147 acts as the Proton donor/acceptor in catalysis. Histidine 148 is a binding site for (S)-2,3,4,5-tetrahydrodipicolinate. Residue lysine 151 is the Proton donor of the active site. 157–158 provides a ligand contact to (S)-2,3,4,5-tetrahydrodipicolinate; it reads GT.

Belongs to the DapB family.

It is found in the cytoplasm. It carries out the reaction (S)-2,3,4,5-tetrahydrodipicolinate + NAD(+) + H2O = (2S,4S)-4-hydroxy-2,3,4,5-tetrahydrodipicolinate + NADH + H(+). The catalysed reaction is (S)-2,3,4,5-tetrahydrodipicolinate + NADP(+) + H2O = (2S,4S)-4-hydroxy-2,3,4,5-tetrahydrodipicolinate + NADPH + H(+). It functions in the pathway amino-acid biosynthesis; L-lysine biosynthesis via DAP pathway; (S)-tetrahydrodipicolinate from L-aspartate: step 4/4. Functionally, catalyzes the conversion of 4-hydroxy-tetrahydrodipicolinate (HTPA) to tetrahydrodipicolinate. This Helicobacter pylori (strain ATCC 700392 / 26695) (Campylobacter pylori) protein is 4-hydroxy-tetrahydrodipicolinate reductase.